The following is a 368-amino-acid chain: mRNA export factor (368 aa).

Residues 15 to 34 (TSMFGSTTTDNHNPMKDIEV) are disordered. WD repeat units follow at residues 37-79 (SPDD…QTIP), 84-114 (MHTG…KMWD), 125-157 (QHDA…KFWD), 168-206 (QLPE…EFRR), 215-255 (HRCV…KDNF), 271-301 (QDIY…SFWD), and 310-346 (TSEQ…EFYN). Thr229 carries the phosphothreonine modification.

The protein belongs to the WD repeat rae1 family. In terms of assembly, interacts with NUMA1 (via N-terminal end of the coiled-coil domain); this interaction promotes spindle formation in mitosis. Interacts with NUP98. Interacts with MYCBP2. Interacts with USP11.

The protein localises to the cytoplasm. It is found in the nucleus. It localises to the cytoskeleton. Its subcellular location is the spindle pole. In terms of biological role, plays a role in mitotic bipolar spindle formation. Binds mRNA. May function in nucleocytoplasmic transport and in directly or indirectly attaching cytoplasmic mRNPs to the cytoskeleton. The polypeptide is mRNA export factor (Rae1) (Mus musculus (Mouse)).